The chain runs to 268 residues: Shikimate dehydrogenase (NADP(+)) (268 aa).

Residues 13–15 (SLS) and Thr-60 each bind shikimate. Residue Lys-64 is the Proton acceptor of the active site. Glu-76 is a binding site for NADP(+). Asn-85 and Asp-100 together coordinate shikimate. NADP(+) contacts are provided by residues 124-128 (GAGGA), 148-153 (NRTMAR), and Ile-209. Tyr-211 is a binding site for shikimate. An NADP(+)-binding site is contributed by Gly-232.

This sequence belongs to the shikimate dehydrogenase family. As to quaternary structure, homodimer.

The enzyme catalyses shikimate + NADP(+) = 3-dehydroshikimate + NADPH + H(+). It participates in metabolic intermediate biosynthesis; chorismate biosynthesis; chorismate from D-erythrose 4-phosphate and phosphoenolpyruvate: step 4/7. In terms of biological role, involved in the biosynthesis of the chorismate, which leads to the biosynthesis of aromatic amino acids. Catalyzes the reversible NADPH linked reduction of 3-dehydroshikimate (DHSA) to yield shikimate (SA). The polypeptide is Shikimate dehydrogenase (NADP(+)) (Staphylococcus aureus (strain USA300)).